We begin with the raw amino-acid sequence, 313 residues long: MRLVTLAPAKVNLVLRVGPVRADGYHDLRTLMVPLDLGDRVDVRVSARRGPVRCTVPGRPELHGPENLAARAAEAFRRRFGVDRAVSIRIEKRTPVTAGLGGGSSDAAAVLRCLARAFRVRDRAALAALALEIGSDVPFFLGPGPAWAAGRGERLSPADVPPLDLVLVYPADPSLAIRAGDAYRWLDEARAGGPQAPRRLGRPGRWRPSLLGNDLQAPCVARKPALQALLGLLVGAGATAAIMSGSGPTVFGVFPGRGAARGAALAIQGRAKGGAAGVQVLLARTVRRHPRVSPWRSPRSASSPSTRRSSRPT.

K10 is an active-site residue. Residue 95–105 (PVTAGLGGGSS) coordinates ATP. D136 is a catalytic residue. The interval 289 to 313 (HPRVSPWRSPRSASSPSTRRSSRPT) is disordered. The span at 292–307 (VSPWRSPRSASSPSTR) shows a compositional bias: low complexity.

It belongs to the GHMP kinase family. IspE subfamily.

It catalyses the reaction 4-CDP-2-C-methyl-D-erythritol + ATP = 4-CDP-2-C-methyl-D-erythritol 2-phosphate + ADP + H(+). The protein operates within isoprenoid biosynthesis; isopentenyl diphosphate biosynthesis via DXP pathway; isopentenyl diphosphate from 1-deoxy-D-xylulose 5-phosphate: step 3/6. Its function is as follows. Catalyzes the phosphorylation of the position 2 hydroxy group of 4-diphosphocytidyl-2C-methyl-D-erythritol. This chain is 4-diphosphocytidyl-2-C-methyl-D-erythritol kinase, found in Anaeromyxobacter dehalogenans (strain 2CP-C).